Reading from the N-terminus, the 207-residue chain is MARYLGPKAKLSRREGTDLFLKSARRSIADKSKFDSKPGQHGRTSGARTSDYGLQLREKQKVKRMYGVLEKQFRRYFEAAESRKGNTGANLLFLLESRLDNVVYRMGFGSTRAEARQLVSHKAITVNGQSVNIPSYLVKTGDLVAVREKSKKQGRIAEALQLATQVGMPAWVEVNTEKAEGLFKKAPDRDEFGADINESLIVELYSR.

The segment at 30 to 51 (DKSKFDSKPGQHGRTSGARTSD) is disordered. The 61-residue stretch at 97–157 (SRLDNVVYRM…EKSKKQGRIA (61 aa)) folds into the S4 RNA-binding domain.

Belongs to the universal ribosomal protein uS4 family. Part of the 30S ribosomal subunit. Contacts protein S5. The interaction surface between S4 and S5 is involved in control of translational fidelity.

Its function is as follows. One of the primary rRNA binding proteins, it binds directly to 16S rRNA where it nucleates assembly of the body of the 30S subunit. Functionally, with S5 and S12 plays an important role in translational accuracy. The sequence is that of Small ribosomal subunit protein uS4 from Verminephrobacter eiseniae (strain EF01-2).